We begin with the raw amino-acid sequence, 437 residues long: Trigger factor (437 aa).

Residues 164-249 (GDFAKFDFEG…LHEIQCKKIG (86 aa)) form the PPIase FKBP-type domain.

It belongs to the FKBP-type PPIase family. Tig subfamily.

The protein resides in the cytoplasm. The catalysed reaction is [protein]-peptidylproline (omega=180) = [protein]-peptidylproline (omega=0). Its function is as follows. Involved in protein export. Acts as a chaperone by maintaining the newly synthesized protein in an open conformation. Functions as a peptidyl-prolyl cis-trans isomerase. In Campylobacter hominis (strain ATCC BAA-381 / DSM 21671 / CCUG 45161 / LMG 19568 / NCTC 13146 / CH001A), this protein is Trigger factor.